Consider the following 167-residue polypeptide: Thioredoxin Y2, chloroplastic (167 aa).

Residues 1 to 58 constitute a chloroplast transit peptide; the sequence is MAISLATAYISPCFTPESSNSASPSRTLSSVRLPSQIRRFGSVQSPSSSTRFAPLTVR. The 106-residue stretch at 59–164 folds into the Thioredoxin domain; that stretch reads AAKKQTFNSF…LVERIENSLQ (106 aa). Active-site nucleophile residues include cysteine 88 and cysteine 91. A disulfide bridge links cysteine 88 with cysteine 91.

Belongs to the thioredoxin family. Plant Y-type subfamily. As to expression, expressed in leaves.

It is found in the plastid. Its subcellular location is the chloroplast stroma. In terms of biological role, thiol-disulfide oxidoreductase that poorly activates chloroplastic malate dehydrogenase (NADP-MDH) and fructose-1,6-bisphosphatase. Provides reducing equivalents for peroxiredoxin Q. The chain is Thioredoxin Y2, chloroplastic from Arabidopsis thaliana (Mouse-ear cress).